The chain runs to 168 residues: Cofilin-1-A (168 aa).

A2 is modified (N-acetylalanine). Residues 4-153 (GVMVSDDVIK…NDPCNLADKL (150 aa)) form the ADF-H domain. A Nuclear localization signal motif is present at residues 30-34 (KKRKK).

This sequence belongs to the actin-binding proteins ADF family. Post-translationally, inactive when phosphorylated. Phosphorylation levels vary during development. Oocytes contain only the phosphorylated form, and 80-95% of cfl1 protein is phosphorylated in unfertilized eggs. Rapid dephosphorylation occurs within 30 minutes after fertilization. Phosphorylation levels increase again between the morula and blastula stages (5-8 hpf) and then decrease again as gastrulation approaches. Dephosphorylated by pdxp. Expressed diffusely in both animal and vegetal hemispheres of the oocyte. During cleavage, expression accumulates around the cleavage furrow, along the vegetal membrane, and later in the midbody. Strongly expressed in the animal hemisphere during blastula stages, with most cells showing expression by gastrulation. By stage 17, expression is highest in cells of the developing neuroectoderm, and at stage 24 the notochord, neural tube, neural crest, somites and some cells of the archenteron show high expression. By stage 35, expression has declined in the notochord, but remains in the neural tube, epidermis and a layer of cells in the archenteron. Also highly expressed in the retina and neuronal cell bodies at the base of the cement gland but not the cement gland itself. At stage 38, expression is widespread, being highest in the nervous system and retina. In the adult, expression is high in the brain, heart, oocyte, stomach, and low in skeletal muscle.

It localises to the nucleus matrix. The protein localises to the cytoplasm. The protein resides in the cytoskeleton. It is found in the cell cortex. Its subcellular location is the membrane. Functionally, may play a role in the regulation of cell morphology and cytoskeletal organization. Binds to F-actin and exhibits pH-sensitive F-actin depolymerizing activity. Required for formation of the cleavage furrow during cytokinesis. This is Cofilin-1-A (cfl1-a) from Xenopus laevis (African clawed frog).